The primary structure comprises 464 residues: Glutamate--tRNA ligase (464 aa).

The 'HIGH' region motif lies at 11–21; that stretch reads PSPTGFIHLGN. Residues 243-247 carry the 'KMSKS' region motif; the sequence is KMSKR. Residue lysine 246 coordinates ATP.

Belongs to the class-I aminoacyl-tRNA synthetase family. Glutamate--tRNA ligase type 1 subfamily. As to quaternary structure, monomer.

It localises to the cytoplasm. It catalyses the reaction tRNA(Glu) + L-glutamate + ATP = L-glutamyl-tRNA(Glu) + AMP + diphosphate. Functionally, catalyzes the attachment of glutamate to tRNA(Glu) in a two-step reaction: glutamate is first activated by ATP to form Glu-AMP and then transferred to the acceptor end of tRNA(Glu). This Polaromonas naphthalenivorans (strain CJ2) protein is Glutamate--tRNA ligase.